Reading from the N-terminus, the 338-residue chain is Ketol-acid reductoisomerase (NADP(+)) (338 aa).

Residues 1–181 (MKVFYDKDAD…GGGRAGIIET (181 aa)) form the KARI N-terminal Rossmann domain. NADP(+) is bound by residues 24–27 (YGSQ), Arg-47, and Ser-52. Residue His-107 is part of the active site. NADP(+) is bound at residue Gly-133. The KARI C-terminal knotted domain maps to 182-327 (NFREETETDL…GKLRAMMPWI (146 aa)). Positions 190, 194, 226, and 230 each coordinate Mg(2+). Position 251 (Ser-251) interacts with substrate.

Belongs to the ketol-acid reductoisomerase family. The cofactor is Mg(2+).

It catalyses the reaction (2R)-2,3-dihydroxy-3-methylbutanoate + NADP(+) = (2S)-2-acetolactate + NADPH + H(+). The catalysed reaction is (2R,3R)-2,3-dihydroxy-3-methylpentanoate + NADP(+) = (S)-2-ethyl-2-hydroxy-3-oxobutanoate + NADPH + H(+). Its pathway is amino-acid biosynthesis; L-isoleucine biosynthesis; L-isoleucine from 2-oxobutanoate: step 2/4. It participates in amino-acid biosynthesis; L-valine biosynthesis; L-valine from pyruvate: step 2/4. In terms of biological role, involved in the biosynthesis of branched-chain amino acids (BCAA). Catalyzes an alkyl-migration followed by a ketol-acid reduction of (S)-2-acetolactate (S2AL) to yield (R)-2,3-dihydroxy-isovalerate. In the isomerase reaction, S2AL is rearranged via a Mg-dependent methyl migration to produce 3-hydroxy-3-methyl-2-ketobutyrate (HMKB). In the reductase reaction, this 2-ketoacid undergoes a metal-dependent reduction by NADPH to yield (R)-2,3-dihydroxy-isovalerate. In Cupriavidus metallidurans (strain ATCC 43123 / DSM 2839 / NBRC 102507 / CH34) (Ralstonia metallidurans), this protein is Ketol-acid reductoisomerase (NADP(+)).